The primary structure comprises 1023 residues: NLR family CARD domain-containing protein 4 (1023 aa).

A CARD domain is found at 1–88 (MNFIKENSQA…PVYQDLTGHS (88 aa)). The tract at residues 95–298 (EEDLDVLAQS…HVGALTVEVG (204 aa)) is nucleotide-binding domain (NBD). Residues 163–476 (SPCLIEGESG…VSKGNSYLKK (314 aa)) enclose the NACHT domain. 169–176 (GESGKGKS) is an ATP binding site. The segment at 356–463 (AHTQTMLFQT…RLSSLLKSRE (108 aa)) is winged-helix domain (WHD). Position 533 is a phosphoserine (serine 533). LRR repeat units follow at residues 578-598 (FFQG…LFDF), 655-678 (MQKF…DIKY), 734-757 (VTDL…LADS), 761-784 (LKNL…SLAE), 786-811 (LRNL…DYIV), 823-846 (EMKL…LHNL), 847-869 (VKLS…ALQG), 877-901 (LEQL…LLKQ), 910-932 (KLGL…FLEM), 935-962 (LRDL…VFEN), 964-984 (KQLV…ALVR), and 998-1020 (EARL…TFKL).

In terms of assembly, homooligomer; homooligomerizes following activation of Naip proteins by pathogenic proteins such as S.typhimurium (Salmonella) flagellin or PrgJ. Component of the NLRC4 inflammasome, at least composed of NLRC4, caspase-1 (CASP1) and some NAIP family member. Interacts with EIF2AK2/PKR. In terms of processing, phosphorylated at Ser-533 following infection of macrophages with S.typhimurium (Salmonella). Phosphorylation is essential for NLRC4 inflammasome function to promote caspase-1 activation and pyroptosis. PRKCD phosphorylates Ser-533 in vitro.

It is found in the cytoplasm. The protein localises to the cytosol. In terms of biological role, key component of inflammasomes that indirectly senses specific proteins from pathogenic bacteria and fungi and responds by assembling an inflammasome complex that promotes caspase-1 activation, cytokine production and macrophage pyroptosis. The NLRC4 inflammasome is activated as part of the innate immune response to a range of intracellular bacteria. The sequence is that of NLR family CARD domain-containing protein 4 (Nlrc4) from Rattus norvegicus (Rat).